An 84-amino-acid chain; its full sequence is Large ribosomal subunit protein bL27 (84 aa).

A disordered region spans residues 1-24; the sequence is MAHKKGGGSSKNGRDSNSQRLGVK.

The protein belongs to the bacterial ribosomal protein bL27 family.

This chain is Large ribosomal subunit protein bL27, found in Leptospira borgpetersenii serovar Hardjo-bovis (strain JB197).